The chain runs to 348 residues: 4-hydroxy-3-methylbut-2-en-1-yl diphosphate synthase (flavodoxin) (348 aa).

Cys263, Cys266, Cys298, and Glu305 together coordinate [4Fe-4S] cluster.

This sequence belongs to the IspG family. Requires [4Fe-4S] cluster as cofactor.

It carries out the reaction (2E)-4-hydroxy-3-methylbut-2-enyl diphosphate + oxidized [flavodoxin] + H2O + 2 H(+) = 2-C-methyl-D-erythritol 2,4-cyclic diphosphate + reduced [flavodoxin]. It participates in isoprenoid biosynthesis; isopentenyl diphosphate biosynthesis via DXP pathway; isopentenyl diphosphate from 1-deoxy-D-xylulose 5-phosphate: step 5/6. Functionally, converts 2C-methyl-D-erythritol 2,4-cyclodiphosphate (ME-2,4cPP) into 1-hydroxy-2-methyl-2-(E)-butenyl 4-diphosphate. The sequence is that of 4-hydroxy-3-methylbut-2-en-1-yl diphosphate synthase (flavodoxin) from Dehalococcoides mccartyi (strain CBDB1).